A 287-amino-acid chain; its full sequence is S-methyl-5'-thioadenosine phosphorylase (287 aa).

Residues threonine 13 and 55–56 (RH) each bind phosphate. Methionine 186 contributes to the substrate binding site. Threonine 187 contacts phosphate. Residue 210–212 (DYD) participates in substrate binding.

Belongs to the PNP/MTAP phosphorylase family. MTAP subfamily. In terms of assembly, homohexamer. Dimer of a homotrimer.

The catalysed reaction is S-methyl-5'-thioadenosine + phosphate = 5-(methylsulfanyl)-alpha-D-ribose 1-phosphate + adenine. It functions in the pathway amino-acid biosynthesis; L-methionine biosynthesis via salvage pathway; S-methyl-5-thio-alpha-D-ribose 1-phosphate from S-methyl-5'-thioadenosine (phosphorylase route): step 1/1. Its function is as follows. Catalyzes the reversible phosphorylation of S-methyl-5'-thioadenosine (MTA) to adenine and 5-methylthioribose-1-phosphate. Involved in the breakdown of MTA, a major by-product of polyamine biosynthesis. Responsible for the first step in the methionine salvage pathway after MTA has been generated from S-adenosylmethionine. Has broad substrate specificity with 6-aminopurine nucleosides as preferred substrates. This Leptospira interrogans serogroup Icterohaemorrhagiae serovar copenhageni (strain Fiocruz L1-130) protein is S-methyl-5'-thioadenosine phosphorylase.